A 135-amino-acid polypeptide reads, in one-letter code: Small ribosomal subunit protein uS12 (135 aa).

The segment at 1–20 (MPTINQLVRKGRHSKVTKSK) is disordered. The segment covering 9–18 (RKGRHSKVTK) has biased composition (basic residues).

Belongs to the universal ribosomal protein uS12 family. In terms of assembly, part of the 30S ribosomal subunit. Contacts proteins S8 and S17. May interact with IF1 in the 30S initiation complex.

Its function is as follows. With S4 and S5 plays an important role in translational accuracy. In terms of biological role, interacts with and stabilizes bases of the 16S rRNA that are involved in tRNA selection in the A site and with the mRNA backbone. Located at the interface of the 30S and 50S subunits, it traverses the body of the 30S subunit contacting proteins on the other side and probably holding the rRNA structure together. The combined cluster of proteins S8, S12 and S17 appears to hold together the shoulder and platform of the 30S subunit. The chain is Small ribosomal subunit protein uS12 from Lactobacillus acidophilus (strain ATCC 700396 / NCK56 / N2 / NCFM).